Here is a 454-residue protein sequence, read N- to C-terminus: Arginine biosynthesis bifunctional protein ArgJ, mitochondrial (454 aa).

6 residues coordinate substrate: Thr-184, Lys-213, Thr-224, Glu-311, Asn-449, and Thr-454. The Nucleophile role is filled by Thr-224.

This sequence belongs to the ArgJ family. As to quaternary structure, heterodimer of an alpha and a beta chain. In terms of processing, the alpha and beta chains are autoproteolytically processed from a single precursor protein within the mitochondrion.

Its subcellular location is the mitochondrion matrix. It catalyses the reaction N(2)-acetyl-L-ornithine + L-glutamate = N-acetyl-L-glutamate + L-ornithine. The catalysed reaction is L-glutamate + acetyl-CoA = N-acetyl-L-glutamate + CoA + H(+). Its pathway is amino-acid biosynthesis; L-arginine biosynthesis; L-ornithine and N-acetyl-L-glutamate from L-glutamate and N(2)-acetyl-L-ornithine (cyclic): step 1/1. It participates in amino-acid biosynthesis; L-arginine biosynthesis; N(2)-acetyl-L-ornithine from L-glutamate: step 1/4. In terms of biological role, catalyzes two activities which are involved in the cyclic version of arginine biosynthesis: the synthesis of acetylglutamate from glutamate and acetyl-CoA, and of ornithine by transacetylation between acetylornithine and glutamate. This chain is Arginine biosynthesis bifunctional protein ArgJ, mitochondrial, found in Aspergillus clavatus (strain ATCC 1007 / CBS 513.65 / DSM 816 / NCTC 3887 / NRRL 1 / QM 1276 / 107).